A 154-amino-acid chain; its full sequence is Protein X (154 aa).

The segment at 68–117 is mitochondrial targeting sequence; it reads PCALRFTSARRMETTVNAHQFLPKVLHKRTLGLSVMSTTDLEAYFKDCLF.

This sequence belongs to the orthohepadnavirus protein X family. As to quaternary structure, may form homodimer. May interact with host CEBPA, CFLAR, CREB1, DDB1, E4F1, HBXIP, HSPD1/HSP60, NFKBIA, POLR2E and SMAD4. Interacts with host SMC5-SMC6 complex and induces its degradation. Interacts with host TRPC4AP; leading to prevent ubiquitination of TRPC4AP. Interacts with host PLSCR1; this interaction promotes ubiquitination and degradation of HBx and impairs HBx-mediated cell proliferation. A fraction may be phosphorylated in insect cells and HepG2 cells, a human hepatoblastoma cell line. Phosphorylated in vitro by host protein kinase C or mitogen-activated protein kinase. N-acetylated in insect cells.

The protein localises to the host cytoplasm. It localises to the host nucleus. It is found in the host mitochondrion. In terms of biological role, multifunctional protein that plays a role in silencing host antiviral defenses and promoting viral transcription. Does not seem to be essential for HBV infection. May be directly involved in development of cirrhosis and liver cancer (hepatocellular carcinoma). Most of cytosolic activities involve modulation of cytosolic calcium. The effect on apoptosis is controversial depending on the cell types in which the studies have been conducted. May induce apoptosis by localizing in mitochondria and causing loss of mitochondrial membrane potential. May also modulate apoptosis by binding host CFLAR, a key regulator of the death-inducing signaling complex (DISC). Promotes viral transcription by using the host E3 ubiquitin ligase DDB1 to target the SMC5-SMC6 complex to proteasomal degradation. This host complex would otherwise bind to viral episomal DNA, and prevents its transcription. Moderately stimulates transcription of many different viral and cellular transcription elements. Promoters and enhancers stimulated by HBx contain DNA binding sites for NF-kappa-B, AP-1, AP-2, c-EBP, ATF/CREB, or the calcium-activated factor NF-AT. This chain is Protein X, found in Hepatitis B virus genotype D (isolate France/alpha1/1989) (HBV-D).